The sequence spans 248 residues: Triosephosphate isomerase (248 aa).

Residue 9–11 (NWK) participates in substrate binding. His93 serves as the catalytic Electrophile. Glu163 (proton acceptor) is an active-site residue. Substrate is bound by residues Gly169, Ser208, and 229 to 230 (GG).

The protein belongs to the triosephosphate isomerase family. In terms of assembly, homodimer.

Its subcellular location is the cytoplasm. The catalysed reaction is D-glyceraldehyde 3-phosphate = dihydroxyacetone phosphate. It participates in carbohydrate biosynthesis; gluconeogenesis. It functions in the pathway carbohydrate degradation; glycolysis; D-glyceraldehyde 3-phosphate from glycerone phosphate: step 1/1. In terms of biological role, involved in the gluconeogenesis. Catalyzes stereospecifically the conversion of dihydroxyacetone phosphate (DHAP) to D-glyceraldehyde-3-phosphate (G3P). In Jannaschia sp. (strain CCS1), this protein is Triosephosphate isomerase.